Reading from the N-terminus, the 57-residue chain is Small ribosomal subunit protein bS21 (57 aa).

This sequence belongs to the bacterial ribosomal protein bS21 family.

In Lysinibacillus sphaericus (strain C3-41), this protein is Small ribosomal subunit protein bS21.